The chain runs to 676 residues: Methionine--tRNA ligase (676 aa).

Residues 15-25 carry the 'HIGH' region motif; the sequence is PYANGSIHLGH. Residues C146, C149, C159, and C162 each coordinate Zn(2+). A 'KMSKS' region motif is present at residues 332-336; that stretch reads KMSKS. ATP is bound at residue K335. The tRNA-binding domain occupies 574–676; that stretch reads DFAKVDMRIA…SGAQPGMQVK (103 aa).

Belongs to the class-I aminoacyl-tRNA synthetase family. MetG type 1 subfamily. Homodimer. Requires Zn(2+) as cofactor.

The protein resides in the cytoplasm. The catalysed reaction is tRNA(Met) + L-methionine + ATP = L-methionyl-tRNA(Met) + AMP + diphosphate. In terms of biological role, is required not only for elongation of protein synthesis but also for the initiation of all mRNA translation through initiator tRNA(fMet) aminoacylation. The protein is Methionine--tRNA ligase of Pectobacterium atrosepticum (strain SCRI 1043 / ATCC BAA-672) (Erwinia carotovora subsp. atroseptica).